The sequence spans 247 residues: Carboxy-S-adenosyl-L-methionine synthase (247 aa).

Residues Tyr39, 64-66 (GCS), 89-90 (DN), 117-118 (DI), Asn132, and Arg199 each bind S-adenosyl-L-methionine.

It belongs to the class I-like SAM-binding methyltransferase superfamily. Cx-SAM synthase family. In terms of assembly, homodimer.

The catalysed reaction is prephenate + S-adenosyl-L-methionine = carboxy-S-adenosyl-L-methionine + 3-phenylpyruvate + H2O. In terms of biological role, catalyzes the conversion of S-adenosyl-L-methionine (SAM) to carboxy-S-adenosyl-L-methionine (Cx-SAM). The protein is Carboxy-S-adenosyl-L-methionine synthase of Shigella boydii serotype 4 (strain Sb227).